We begin with the raw amino-acid sequence, 360 residues long: Phospho-N-acetylmuramoyl-pentapeptide-transferase (360 aa).

Transmembrane regions (helical) follow at residues 20 to 40, 71 to 91, 93 to 113, 134 to 154, 168 to 188, 199 to 219, 239 to 259, 263 to 283, 288 to 308, and 337 to 357; these read YITF…FFFG, TPTM…LLWA, LDNG…AIGF, LLIG…LHPA, ALIN…LGAA, GLAI…AYMV, LAVF…YNAP, VFMG…IAVV, IVLA…IIQV, and QIVI…LATL.

Belongs to the glycosyltransferase 4 family. MraY subfamily. It depends on Mg(2+) as a cofactor.

It is found in the cell inner membrane. It carries out the reaction UDP-N-acetyl-alpha-D-muramoyl-L-alanyl-gamma-D-glutamyl-meso-2,6-diaminopimeloyl-D-alanyl-D-alanine + di-trans,octa-cis-undecaprenyl phosphate = di-trans,octa-cis-undecaprenyl diphospho-N-acetyl-alpha-D-muramoyl-L-alanyl-D-glutamyl-meso-2,6-diaminopimeloyl-D-alanyl-D-alanine + UMP. The protein operates within cell wall biogenesis; peptidoglycan biosynthesis. Functionally, catalyzes the initial step of the lipid cycle reactions in the biosynthesis of the cell wall peptidoglycan: transfers peptidoglycan precursor phospho-MurNAc-pentapeptide from UDP-MurNAc-pentapeptide onto the lipid carrier undecaprenyl phosphate, yielding undecaprenyl-pyrophosphoryl-MurNAc-pentapeptide, known as lipid I. This chain is Phospho-N-acetylmuramoyl-pentapeptide-transferase, found in Paracoccus denitrificans (strain Pd 1222).